The primary structure comprises 506 residues: Maturase K (506 aa).

This sequence belongs to the intron maturase 2 family. MatK subfamily.

The protein resides in the plastid. Its subcellular location is the chloroplast. Usually encoded in the trnK tRNA gene intron. Probably assists in splicing its own and other chloroplast group II introns. This Phyllodoce caerulea (Blue mountain heath) protein is Maturase K.